The chain runs to 679 residues: Pollen receptor-like kinase 4 (679 aa).

A signal peptide spans M1–S39. LRR repeat units lie at residues I118–F141, G142–G165, H167–P191, L193–L217, and S234–S257. A compositionally biased stretch (low complexity) spans L252–P269. A disordered region spans residues L252–E271. A helical membrane pass occupies residues F278 to V298. Positions S311 to S344 are disordered. Over residues D319–A336 the composition is skewed to basic and acidic residues. A Protein kinase domain is found at R372–L646. S374 is modified (phosphoserine). Residues L378–S386 and K400 each bind ATP. Residues S452 and S455 each carry the phosphoserine modification. Position 472 is a phosphothreonine (T472). Phosphotyrosine is present on Y542.

Belongs to the protein kinase superfamily. Ser/Thr protein kinase family. In terms of assembly, interacts in vitro with ROPGEF1 (via PRONE domain). Interacts weakly with the GRI peptide. As to expression, expressed in pollen and/or in flowers, but not in leaves.

The protein resides in the membrane. The catalysed reaction is L-seryl-[protein] + ATP = O-phospho-L-seryl-[protein] + ADP + H(+). The enzyme catalyses L-threonyl-[protein] + ATP = O-phospho-L-threonyl-[protein] + ADP + H(+). Its function is as follows. Receptor-like kinase involved in the control of pollen germination and pollen tube polar growth. Can phosphorylate ROPGEF1 in vitro. This is Pollen receptor-like kinase 4 from Arabidopsis thaliana (Mouse-ear cress).